A 141-amino-acid chain; its full sequence is VLSSADKANIKATWDKIGGHGGEYGAEALERTFLCFPTTKTYFPHFDLSHGSAQVKAHGKKVADALALAAAHLDDLPSALSALSDLHAYKLRVDPVNFKLLSHCLLVTLAAHHPAEFTPAVHSDLDKFLSSVSTVLTSKYR.

In terms of domain architecture, Globin spans 1-141; it reads VLSSADKANI…VSTVLTSKYR (141 aa). Serine 3 bears the Phosphoserine mark. Residues lysine 7 and lysine 11 each carry the N6-succinyllysine modification. At lysine 16 the chain carries N6-acetyllysine; alternate. Lysine 16 is modified (N6-succinyllysine; alternate). Tyrosine 24 carries the phosphotyrosine modification. Lysine 40 is subject to N6-succinyllysine. Phosphoserine is present on serine 49. O2 is bound at residue histidine 58. Histidine 87 contributes to the heme b binding site. At serine 102 the chain carries Phosphoserine. Threonine 108 is modified (phosphothreonine). The residue at position 131 (serine 131) is a Phosphoserine. Phosphothreonine occurs at positions 134 and 137. Position 138 is a phosphoserine (serine 138).

The protein belongs to the globin family. Heterotetramer of two alpha chains and two beta chains. Red blood cells.

Its function is as follows. Involved in oxygen transport from the lung to the various peripheral tissues. Hemopressin acts as an antagonist peptide of the cannabinoid receptor CNR1. Hemopressin-binding efficiently blocks cannabinoid receptor CNR1 and subsequent signaling. The polypeptide is Hemoglobin subunit alpha (HBA) (Crocuta crocuta (Spotted hyena)).